Consider the following 259-residue polypeptide: Protein GrpE (259 aa).

Disordered stretches follow at residues Met1 to Ser74 and Pro228 to Asn259. The segment covering Ser17 to Glu40 has biased composition (low complexity). 2 stretches are compositionally biased toward polar residues: residues Val56–Gly73 and Gln240–Gly253.

Belongs to the GrpE family. As to quaternary structure, homodimer.

Its subcellular location is the cytoplasm. Participates actively in the response to hyperosmotic and heat shock by preventing the aggregation of stress-denatured proteins, in association with DnaK and GrpE. It is the nucleotide exchange factor for DnaK and may function as a thermosensor. Unfolded proteins bind initially to DnaJ; upon interaction with the DnaJ-bound protein, DnaK hydrolyzes its bound ATP, resulting in the formation of a stable complex. GrpE releases ADP from DnaK; ATP binding to DnaK triggers the release of the substrate protein, thus completing the reaction cycle. Several rounds of ATP-dependent interactions between DnaJ, DnaK and GrpE are required for fully efficient folding. The sequence is that of Protein GrpE from Prochlorococcus marinus (strain NATL2A).